A 156-amino-acid polypeptide reads, in one-letter code: MRLRVAALGRIKSGPERTLVDDYLDRGTATGRAIGLGPFAESEIDTRSLKSSSDESRALAAGLDPGARIVLLDERGKALNSRQLARQIGQWRDEGCREAVFCIGGADGHDRSQLPQPDLMLSFGPAVFPHKLVRVMLAEQLYRAVSILAGTPYHRD.

Residues Leu-72 and Gly-104 each coordinate S-adenosyl-L-methionine.

This sequence belongs to the RNA methyltransferase RlmH family. In terms of assembly, homodimer.

It localises to the cytoplasm. The catalysed reaction is pseudouridine(1915) in 23S rRNA + S-adenosyl-L-methionine = N(3)-methylpseudouridine(1915) in 23S rRNA + S-adenosyl-L-homocysteine + H(+). Functionally, specifically methylates the pseudouridine at position 1915 (m3Psi1915) in 23S rRNA. This Maricaulis maris (strain MCS10) (Caulobacter maris) protein is Ribosomal RNA large subunit methyltransferase H.